Here is a 128-residue protein sequence, read N- to C-terminus: Azurin (128 aa).

The region spanning alanine 1 to lysine 128 is the Plastocyanin-like domain. A disulfide bridge connects residues cysteine 3 and cysteine 26. Cu cation is bound by residues histidine 46, cysteine 112, histidine 117, and methionine 121.

It is found in the periplasm. In terms of biological role, transfers electrons from cytochrome c551 to cytochrome oxidase. This is Azurin from Pseudomonas aeruginosa.